The chain runs to 437 residues: Protein farnesyltransferase subunit beta (437 aa).

PFTB repeat units lie at residues 123–164 (ATDV…CIIG), 174–215 (REKL…SLTN), 222–263 (FEGT…VILK), 270–312 (LKSL…PLLH), and 332–374 (QQAL…SIAQ). Residues 248 to 251 (HGGY) and 291 to 294 (RCNK) each bind (2E,6E)-farnesyl diphosphate. Residues Asp-297 and Cys-299 each contribute to the Zn(2+) site. Residue 300 to 303 (YSFW) participates in (2E,6E)-farnesyl diphosphate binding. His-362 is a binding site for Zn(2+). A Phosphothreonine modification is found at Thr-436.

It belongs to the protein prenyltransferase subunit beta family. Heterodimer of FNTA and FNTB. It depends on Zn(2+) as a cofactor.

The enzyme catalyses L-cysteinyl-[protein] + (2E,6E)-farnesyl diphosphate = S-(2E,6E)-farnesyl-L-cysteinyl-[protein] + diphosphate. Functionally, essential subunit of the farnesyltransferase complex. Catalyzes the transfer of a farnesyl moiety from farnesyl diphosphate to a cysteine at the fourth position from the C-terminus of several proteins having the C-terminal sequence Cys-aliphatic-aliphatic-X. This Homo sapiens (Human) protein is Protein farnesyltransferase subunit beta (FNTB).